The primary structure comprises 593 residues: Probable tripeptidyl-peptidase SED3 (593 aa).

Positions 1 to 18 (MLLRWHSVIPLFLAMTVA) are cleaved as a signal peptide. Positions 19 to 198 (FPNTYRTVVE…NLQAIYLSTN (180 aa)) are cleaved as a propeptide — removed in mature form. N-linked (GlcNAc...) asparagine glycans are attached at residues Asn204, Asn261, and Asn275. Residues 206–592 (TITPRCLREL…RILAKIVQHM (387 aa)) form the Peptidase S53 domain. Catalysis depends on charge relay system residues Glu282 and Asp286. Residue Asn295 is glycosylated (N-linked (GlcNAc...) asparagine). Catalysis depends on Ser496, which acts as the Charge relay system. The Ca(2+) site is built by Asp538 and Ile539. Residues Asn554 and Asn566 are each glycosylated (N-linked (GlcNAc...) asparagine). The Ca(2+) site is built by Gly570 and Asp572.

It depends on Ca(2+) as a cofactor.

It localises to the secreted. The protein resides in the extracellular space. It catalyses the reaction Release of an N-terminal tripeptide from a polypeptide.. Functionally, secreted tripeptidyl-peptidase which degrades proteins at acidic pHs and is involved in virulence. This chain is Probable tripeptidyl-peptidase SED3 (SED3), found in Arthroderma benhamiae (strain ATCC MYA-4681 / CBS 112371) (Trichophyton mentagrophytes).